A 170-amino-acid chain; its full sequence is Universal stress protein MJ0531 (170 aa).

Belongs to the universal stress protein A family.

The protein is Universal stress protein MJ0531 of Methanocaldococcus jannaschii (strain ATCC 43067 / DSM 2661 / JAL-1 / JCM 10045 / NBRC 100440) (Methanococcus jannaschii).